Reading from the N-terminus, the 119-residue chain is Auxin-responsive protein SAUR78 (119 aa).

This sequence belongs to the ARG7 family.

May be involved in the regulation of ethylene receptor signaling. Promotes cell expansion and plant growth. In Arabidopsis thaliana (Mouse-ear cress), this protein is Auxin-responsive protein SAUR78.